We begin with the raw amino-acid sequence, 701 residues long: Polyribonucleotide nucleotidyltransferase (701 aa).

2 residues coordinate Mg(2+): D489 and D495. The KH domain maps to P556–I615. Residues G625–K693 form the S1 motif domain.

It belongs to the polyribonucleotide nucleotidyltransferase family. The cofactor is Mg(2+).

The protein localises to the cytoplasm. The catalysed reaction is RNA(n+1) + phosphate = RNA(n) + a ribonucleoside 5'-diphosphate. Its function is as follows. Involved in mRNA degradation. Catalyzes the phosphorolysis of single-stranded polyribonucleotides processively in the 3'- to 5'-direction. The protein is Polyribonucleotide nucleotidyltransferase of Magnetococcus marinus (strain ATCC BAA-1437 / JCM 17883 / MC-1).